Consider the following 265-residue polypeptide: Thiazole synthase (265 aa).

Lys107 (schiff-base intermediate with DXP) is an active-site residue. Residues Gly168, Ala194–Gly195, and Asn216–Thr217 contribute to the 1-deoxy-D-xylulose 5-phosphate site.

Belongs to the ThiG family. As to quaternary structure, homotetramer. Forms heterodimers with either ThiH or ThiS.

Its subcellular location is the cytoplasm. It catalyses the reaction [ThiS sulfur-carrier protein]-C-terminal-Gly-aminoethanethioate + 2-iminoacetate + 1-deoxy-D-xylulose 5-phosphate = [ThiS sulfur-carrier protein]-C-terminal Gly-Gly + 2-[(2R,5Z)-2-carboxy-4-methylthiazol-5(2H)-ylidene]ethyl phosphate + 2 H2O + H(+). It functions in the pathway cofactor biosynthesis; thiamine diphosphate biosynthesis. Its function is as follows. Catalyzes the rearrangement of 1-deoxy-D-xylulose 5-phosphate (DXP) to produce the thiazole phosphate moiety of thiamine. Sulfur is provided by the thiocarboxylate moiety of the carrier protein ThiS. In vitro, sulfur can be provided by H(2)S. This chain is Thiazole synthase, found in Pseudomonas aeruginosa (strain LESB58).